Consider the following 204-residue polypeptide: Protein C (204 aa).

Residues 1–78 form a disordered region; it reads MPSFLRGILK…TEQSQRRPKI (78 aa). The span at 10-20 shows a compositional bias: basic and acidic residues; that stretch reads KPKERHHENKN. Residues 25 to 34 show a composition bias toward low complexity; that stretch reads SSDSLTSSYP.

The protein belongs to the respirovirus protein C family.

The polypeptide is Protein C (P/V/C) (Homo sapiens (Human)).